The primary structure comprises 379 residues: Putative zinc metalloprotease BR1156/BS1330_I1152 (379 aa).

Residue His-33 participates in Zn(2+) binding. Residue Glu-34 is part of the active site. Residue His-37 coordinates Zn(2+). The next 4 helical transmembrane spans lie at 39–61 (LVARWCGIGAQAFSIGFGPELLG), 122–144 (VFAGPAFNIILTIAIFSVFFALY), 305–327 (FDWLIQLMAMLSIGIGLLNLFPL), and 355–377 (IFYRIGFLLVMGFMGFVLFNDLF). The PDZ domain occupies 133–208 (TIAIFSVFFA…LNFTVERDGK (76 aa)).

It belongs to the peptidase M50B family. Zn(2+) is required as a cofactor.

It localises to the cell inner membrane. The sequence is that of Putative zinc metalloprotease BR1156/BS1330_I1152 from Brucella suis biovar 1 (strain 1330).